The chain runs to 104 residues: uncharacterized protein (104 aa).

The next 2 helical transmembrane spans lie at Leu-45–Phe-65 and Leu-70–Leu-90.

The protein resides in the membrane. This is an uncharacterized protein from Saccharomyces cerevisiae (strain ATCC 204508 / S288c) (Baker's yeast).